The sequence spans 177 residues: Probable adenylyl-sulfate kinase (177 aa).

12–19 contacts ATP; that stretch reads GLSGAGKT. Ser86 functions as the Phosphoserine intermediate in the catalytic mechanism.

This sequence belongs to the APS kinase family.

The enzyme catalyses adenosine 5'-phosphosulfate + ATP = 3'-phosphoadenylyl sulfate + ADP + H(+). It participates in sulfur metabolism; hydrogen sulfide biosynthesis; sulfite from sulfate: step 2/3. Catalyzes the synthesis of activated sulfate. The protein is Probable adenylyl-sulfate kinase (cysC) of Synechocystis sp. (strain ATCC 27184 / PCC 6803 / Kazusa).